Consider the following 377-residue polypeptide: Nitric oxide reductase FlRd-NAD(+) reductase (377 aa).

Belongs to the FAD-dependent oxidoreductase family. FAD serves as cofactor.

The protein resides in the cytoplasm. It carries out the reaction 2 reduced [nitric oxide reductase rubredoxin domain] + NAD(+) + H(+) = 2 oxidized [nitric oxide reductase rubredoxin domain] + NADH. It functions in the pathway nitrogen metabolism; nitric oxide reduction. Functionally, one of at least two accessory proteins for anaerobic nitric oxide (NO) reductase. Reduces the rubredoxin moiety of NO reductase. The polypeptide is Nitric oxide reductase FlRd-NAD(+) reductase (Escherichia coli (strain 55989 / EAEC)).